A 287-amino-acid chain; its full sequence is uncharacterized protein (287 aa).

Residues 1–23 (MTVSDSPAQRQTPPQTPGGTAPR) form a disordered region. The segment covering 7–23 (PAQRQTPPQTPGGTAPR) has biased composition (low complexity). Positions 31, 33, and 204 each coordinate Mg(2+).

The protein belongs to the HAD-like hydrolase superfamily. SerB family.

This is an uncharacterized protein from Mycobacterium tuberculosis (strain CDC 1551 / Oshkosh).